The chain runs to 301 residues: Aldose reductase (301 aa).

11 to 20 (GKEIPTVGLG) contributes to the NADP(+) binding site. Tyr-51 acts as the Proton donor in catalysis. His-111 contacts substrate. 209–266 (SSLGSAPGSSAKVRDDKTIKAIAKKYGCAPSQIILSYITAQGICVIPKSRSKEHLREN) is an NADP(+) binding site.

This sequence belongs to the aldo/keto reductase family.

It localises to the cytoplasm. The enzyme catalyses an alditol + NAD(+) = an aldose + NADH + H(+). It carries out the reaction an alditol + NADP(+) = an aldose + NADPH + H(+). In terms of biological role, catalyzes the NADPH-dependent reduction of a wide variety of carbonyl-containing compounds to their corresponding alcohols with a broad range of catalytic efficiencies. This is Aldose reductase from Encephalitozoon cuniculi (strain GB-M1) (Microsporidian parasite).